Reading from the N-terminus, the 640-residue chain is ESX-3 secretion system protein EccA3 (640 aa).

393–400 lines the ATP pocket; it reads GPPGTGKT.

This sequence belongs to the CbxX/CfxQ family. As to quaternary structure, part of the ESX-3 / type VII secretion system (T7SS), which is composed of cytosolic and membrane components.

The protein localises to the cytoplasm. Part of an ESX-3 / type VII specialized secretion system (T7SS), which exports several proteins. EccA3 exhibits ATPase activity and may provide energy for the export of ESX-3 substrates. This chain is ESX-3 secretion system protein EccA3, found in Mycobacterium leprae (strain TN).